The chain runs to 101 residues: Aspartyl/glutamyl-tRNA(Asn/Gln) amidotransferase subunit C (101 aa).

Belongs to the GatC family. As to quaternary structure, heterotrimer of A, B and C subunits.

The catalysed reaction is L-glutamyl-tRNA(Gln) + L-glutamine + ATP + H2O = L-glutaminyl-tRNA(Gln) + L-glutamate + ADP + phosphate + H(+). It carries out the reaction L-aspartyl-tRNA(Asn) + L-glutamine + ATP + H2O = L-asparaginyl-tRNA(Asn) + L-glutamate + ADP + phosphate + 2 H(+). Allows the formation of correctly charged Asn-tRNA(Asn) or Gln-tRNA(Gln) through the transamidation of misacylated Asp-tRNA(Asn) or Glu-tRNA(Gln) in organisms which lack either or both of asparaginyl-tRNA or glutaminyl-tRNA synthetases. The reaction takes place in the presence of glutamine and ATP through an activated phospho-Asp-tRNA(Asn) or phospho-Glu-tRNA(Gln). In Salinispora tropica (strain ATCC BAA-916 / DSM 44818 / JCM 13857 / NBRC 105044 / CNB-440), this protein is Aspartyl/glutamyl-tRNA(Asn/Gln) amidotransferase subunit C.